Reading from the N-terminus, the 290-residue chain is 4-hydroxybenzoate octaprenyltransferase (290 aa).

8 helical membrane-spanning segments follow: residues 24 to 44, 48 to 68, 98 to 118, 142 to 162, 171 to 191, 214 to 234, 239 to 259, and 270 to 290; these read IGFFLLLWPTLWGLWLSHKGI, VVLIVFVAGALCMRSAGCIIN, LVALSILLFIAFILVLSLNFI, FPQVMLGLLFSWPILMAFTAI, WLLFLMNTVWTIVYDTQYAMI, FLIGILQLCIVFILGIIGWKE, VFYFFSLFGVIILFMWQQILI, and AFLSNNYVGMLVFIGIASSFH.

It belongs to the UbiA prenyltransferase family. It depends on Mg(2+) as a cofactor.

Its subcellular location is the cell inner membrane. The enzyme catalyses all-trans-octaprenyl diphosphate + 4-hydroxybenzoate = 4-hydroxy-3-(all-trans-octaprenyl)benzoate + diphosphate. It participates in cofactor biosynthesis; ubiquinone biosynthesis. In terms of biological role, catalyzes the prenylation of para-hydroxybenzoate (PHB) with an all-trans polyprenyl group. Mediates the second step in the final reaction sequence of ubiquinone-8 (UQ-8) biosynthesis, which is the condensation of the polyisoprenoid side chain with PHB, generating the first membrane-bound Q intermediate 3-octaprenyl-4-hydroxybenzoate. The protein is 4-hydroxybenzoate octaprenyltransferase of Blochmanniella pennsylvanica (strain BPEN).